Reading from the N-terminus, the 634-residue chain is uncharacterized protein (634 aa).

Positions 1–40 are cleaved as a signal peptide; the sequence is MWLQQRLKGLPGLLSSSWARRLLCLLGLLLLLLWFGGSGA. The Extracellular portion of the chain corresponds to 41–589; sequence RRAAGGLHLL…DEHMAQQDPG (549 aa). N-linked (GlcNAc...) asparagine glycosylation occurs at asparagine 363. Residues 590–610 traverse the membrane as a helical segment; the sequence is LPFLFWFSVASLITLFHLFLF. At 611–634 the chain is on the cytoplasmic side; that stretch reads KLIYNEYCGPGAKPLFRSKEDPSV.

The protein resides in the membrane. This is an uncharacterized protein from Homo sapiens (Human).